Reading from the N-terminus, the 72-residue chain is Cytochrome c oxidase copper chaperone 2 (72 aa).

Cu cation is bound by residues Cys32 and Cys33. The 41-residue stretch at 32–72 (CCACPDTKKLRDECIVEHGESACTKWIEAHILCLRSEGFKV) folds into the CHCH domain. Short sequence motifs (cx9C motif) lie at residues 35–45 (CPDTKKLRDEC) and 54–64 (CTKWIEAHILC). 2 disulfide bridges follow: Cys35-Cys64 and Cys45-Cys54.

It belongs to the COX17 family.

It is found in the mitochondrion intermembrane space. Its function is as follows. Copper chaperone for cytochrome c oxidase (COX). Binds 2 copper ions and delivers them to the Cu(A) site of COX. This is Cytochrome c oxidase copper chaperone 2 (COX17-2) from Arabidopsis thaliana (Mouse-ear cress).